Reading from the N-terminus, the 261-residue chain is MGSIAGFSSAVLSKLGIPVPYAPRLLAGGWVVAGWAGLAYGVYLTVIALRLPPGSELTGHAMLQPAFKASMAVLLAAAAVAHPIGRERRWLVPALLLSATGDWLLAIPWWTWAFVFGLGAFLLAHLCFIGALLPLARQAAPSRGRVAAVVAMCVASAGLLVWFWPHLGKDNLTIPVTVYIVALSAMVCTALLARLPTIWTAVGAVCFAASDSMIGIGRFILGNEALAVPIWWSYAAAEILITAGFFFGREVPDNAAAPTDS.

Helical transmembrane passes span 29 to 49 (GWVV…VIAL), 65 to 85 (PAFK…HPIG), 90 to 107 (WLVP…LLAI), 111 to 133 (TWAF…GALL), 146 to 166 (VAAV…FWPH), 172 to 192 (LTIP…TALL), 197 to 217 (TIWT…IGIG), and 227 to 247 (AVPI…GFFF).

The protein belongs to the TMEM86 family.

It is found in the cell membrane. It catalyses the reaction a 1-O-(1Z-alkenyl)-sn-glycero-3-phosphocholine + H2O = a 2,3-saturated aldehyde + sn-glycerol 3-phosphocholine. The enzyme catalyses a 1-O-(1Z-alkenyl)-sn-glycero-3-phosphoethanolamine + H2O = a 2,3-saturated aldehyde + sn-glycero-3-phosphoethanolamine. Specifically hydrolyzes the vinyl ether bond of lysoplasmenylcholine (pLPC) and lysoplasmenylethanolamine (pLPE) to release a fatty aldehyde and glycerophospho-choline or glycerophospho-ethanolamine. The protein is Lysoplasmalogenase of Mycobacterium bovis (strain ATCC BAA-935 / AF2122/97).